The chain runs to 61 residues: Small ribosomal subunit protein uS14 (61 aa).

Zn(2+) is bound by residues cysteine 24, cysteine 27, cysteine 40, and cysteine 43.

This sequence belongs to the universal ribosomal protein uS14 family. Zinc-binding uS14 subfamily. As to quaternary structure, part of the 30S ribosomal subunit. Contacts proteins S3 and S10. The cofactor is Zn(2+).

Functionally, binds 16S rRNA, required for the assembly of 30S particles and may also be responsible for determining the conformation of the 16S rRNA at the A site. The polypeptide is Small ribosomal subunit protein uS14 (Fervidobacterium nodosum (strain ATCC 35602 / DSM 5306 / Rt17-B1)).